The sequence spans 556 residues: Peptide chain release factor 3 (556 aa).

Residues 28–297 (QQRRNFAIIS…AFLDYALKPG (270 aa)) enclose the tr-type G domain. GTP is bound by residues 37-44 (SHPDAGKT), 105-109 (DTPGH), and 159-162 (NKMD).

It belongs to the TRAFAC class translation factor GTPase superfamily. Classic translation factor GTPase family. PrfC subfamily.

The protein localises to the cytoplasm. Its function is as follows. Increases the formation of ribosomal termination complexes and stimulates activities of RF-1 and RF-2. It binds guanine nucleotides and has strong preference for UGA stop codons. It may interact directly with the ribosome. The stimulation of RF-1 and RF-2 is significantly reduced by GTP and GDP, but not by GMP. This is Peptide chain release factor 3 from Synechococcus elongatus (strain ATCC 33912 / PCC 7942 / FACHB-805) (Anacystis nidulans R2).